The following is a 197-amino-acid chain: Protein SYM1 (197 aa).

A run of 4 helical transmembrane segments spans residues alanine 20 to threonine 40, alanine 55 to asparagine 75, valine 97 to methionine 117, and leucine 137 to leucine 157.

It belongs to the peroxisomal membrane protein PXMP2/4 family.

Its subcellular location is the mitochondrion inner membrane. In terms of biological role, may be involved in cellular response to stress. Required to maintain mitochondrial DNA (mtDNA) integrity and stability. Required for ethanol metabolism and tolerance during heat shock. This Saccharomyces cerevisiae (strain ATCC 204508 / S288c) (Baker's yeast) protein is Protein SYM1 (SYM1).